A 262-amino-acid chain; its full sequence is Transmembrane protein 106A (262 aa).

A helical transmembrane segment spans residues 95 to 115 (FVFLAVLICLVTSSFIVFFLF).

It belongs to the TMEM106 family. As to expression, expressed in renal cells (at protein level). Expressed in epithelial cells.

The protein resides in the cell membrane. Its function is as follows. Activates macrophages and polarizes them into M1-like macrophages through the activation of the MAPK and NF-kappaB signaling pathway. Upon activation, up-regulates the expression of CD80, CD86, CD69 and MHC II on macrophages, and induces the release of pro-inflammatory cytokines such as TNF, IL1B, IL6, CCL2 and nitric oxide. May play a role in inhibition of proliferation and migration. The polypeptide is Transmembrane protein 106A (TMEM106A) (Homo sapiens (Human)).